A 242-amino-acid polypeptide reads, in one-letter code: Lectin-like protein At1g53060 (242 aa).

The tract at residues 3 to 237 (FHGDAEYASE…RHEILDWSFE (235 aa)) is legume-lectin like. At S207 the chain carries Phosphoserine.

Belongs to the leguminous lectin family.

This chain is Lectin-like protein At1g53060, found in Arabidopsis thaliana (Mouse-ear cress).